The following is a 170-amino-acid chain: Ureidoglycolate lyase (170 aa).

Belongs to the ureidoglycolate lyase family. In terms of assembly, homodimer. It depends on Ni(2+) as a cofactor.

It catalyses the reaction (S)-ureidoglycolate = urea + glyoxylate. The protein operates within nitrogen metabolism; (S)-allantoin degradation. Its function is as follows. Catalyzes the catabolism of the allantoin degradation intermediate (S)-ureidoglycolate, generating urea and glyoxylate. Involved in the utilization of allantoin as nitrogen source. The polypeptide is Ureidoglycolate lyase (Stutzerimonas stutzeri (strain A1501) (Pseudomonas stutzeri)).